A 314-amino-acid chain; its full sequence is tRNA pseudouridine synthase B (314 aa).

D41 functions as the Nucleophile in the catalytic mechanism.

The protein belongs to the pseudouridine synthase TruB family. Type 1 subfamily.

The catalysed reaction is uridine(55) in tRNA = pseudouridine(55) in tRNA. Responsible for synthesis of pseudouridine from uracil-55 in the psi GC loop of transfer RNAs. This is tRNA pseudouridine synthase B from Prochlorococcus marinus (strain NATL1A).